The sequence spans 318 residues: GTP cyclohydrolase MptA (318 aa).

Belongs to the GTP cyclohydrolase IV family. Homodimer. The cofactor is Fe(2+).

It catalyses the reaction GTP + H2O = 7,8-dihydroneopterin 2',3'-cyclic phosphate + formate + diphosphate + H(+). The protein operates within cofactor biosynthesis; 5,6,7,8-tetrahydromethanopterin biosynthesis. Functionally, converts GTP to 7,8-dihydro-D-neopterin 2',3'-cyclic phosphate, the first intermediate in the biosynthesis of coenzyme methanopterin. The polypeptide is GTP cyclohydrolase MptA (Methanosarcina mazei (strain ATCC BAA-159 / DSM 3647 / Goe1 / Go1 / JCM 11833 / OCM 88) (Methanosarcina frisia)).